Reading from the N-terminus, the 38-residue chain is Large ribosomal subunit protein bL36 (38 aa).

It belongs to the bacterial ribosomal protein bL36 family.

The protein is Large ribosomal subunit protein bL36 of Chlorobaculum parvum (strain DSM 263 / NCIMB 8327) (Chlorobium vibrioforme subsp. thiosulfatophilum).